Here is a 906-residue protein sequence, read N- to C-terminus: Protein translocase subunit SecA (906 aa).

ATP-binding positions include Q86, 104–108, and D499; that span reads GEGKT. Residues C890, C892, C901, and H902 each coordinate Zn(2+).

This sequence belongs to the SecA family. As to quaternary structure, monomer and homodimer. Part of the essential Sec protein translocation apparatus which comprises SecA, SecYEG and auxiliary proteins SecDF-YajC and YidC. It depends on Zn(2+) as a cofactor.

The protein resides in the cell inner membrane. The protein localises to the cytoplasm. It catalyses the reaction ATP + H2O + cellular proteinSide 1 = ADP + phosphate + cellular proteinSide 2.. Functionally, part of the Sec protein translocase complex. Interacts with the SecYEG preprotein conducting channel. Has a central role in coupling the hydrolysis of ATP to the transfer of proteins into and across the cell membrane, serving both as a receptor for the preprotein-SecB complex and as an ATP-driven molecular motor driving the stepwise translocation of polypeptide chains across the membrane. This chain is Protein translocase subunit SecA, found in Rickettsia prowazekii (strain Madrid E).